Consider the following 446-residue polypeptide: D(1A) dopamine receptor (446 aa).

Residues 1–23 are Extracellular-facing; that stretch reads MRTLNTSAMDGTGLVVERDFSVR. N-linked (GlcNAc...) asparagine glycosylation occurs at asparagine 5. Residues 24–49 form a helical membrane-spanning segment; it reads ILTACFLSLLILSTLLGNTLVCAAVI. The Cytoplasmic segment spans residues 50-60; the sequence is RFRHLRSKVTN. The helical transmembrane segment at 61 to 87 threads the bilayer; that stretch reads FFVISLAVSDLLVAVLVMPWKAVAEIA. Residues 88–96 are Extracellular-facing; it reads GFWPFGSFC. Cysteines 96 and 186 form a disulfide. A helical transmembrane segment spans residues 97–119; that stretch reads NIWVAFDIMCSTASILNLCVISV. Residues 120–138 lie on the Cytoplasmic side of the membrane; that stretch reads DRYWAISSPFRYERKMTPK. A helical membrane pass occupies residues 139–163; the sequence is AAFILISVAWTLSVLISFIPVQLSW. Over 164–192 the chain is Extracellular; it reads HKAKPTSPSDGNATSLAETIDNCDSSLSR. Asparagine 175 carries an N-linked (GlcNAc...) asparagine glycan. The chain crosses the membrane as a helical span at residues 193-218; it reads TYAISSSVISFYIPVAIMIVTYTRIY. Over 219 to 272 the chain is Cytoplasmic; sequence RIAQKQIRRIAALERAAVHAKNCQTTTGNGKPVECSQPESSFKMSFKRETKVLK. Residues 273-299 traverse the membrane as a helical segment; that stretch reads TLSVIMGVFVCCWLPFFILNCILPFCG. The Extracellular segment spans residues 300-312; it reads SGETQPFCIDSIT. Residues 313 to 337 traverse the membrane as a helical segment; sequence FDVFVWFGWANSSLNPIIYAFNADF. Topologically, residues 338–446 are cytoplasmic; the sequence is RKAFSTLLGC…PITQNGQHPT (109 aa). Residues cysteine 347 and cysteine 351 are each lipidated (S-palmitoyl cysteine).

This sequence belongs to the G-protein coupled receptor 1 family. In terms of assembly, interacts with DNAJC14 via its C-terminus. Interacts with DRD2. Interacts with DORIP1.

It localises to the cell membrane. The protein localises to the endoplasmic reticulum membrane. Its subcellular location is the cell projection. It is found in the cilium membrane. The protein resides in the dendrite. It localises to the dendritic spine. Its function is as follows. Dopamine receptor whose activity is mediated by G proteins which activate adenylyl cyclase. The protein is D(1A) dopamine receptor (DRD1) of Macaca mulatta (Rhesus macaque).